A 511-amino-acid polypeptide reads, in one-letter code: 2,3-bisphosphoglycerate-independent phosphoglycerate mutase (511 aa).

Asp12 contributes to the Mn(2+) binding site. Tyr36 bears the Phosphotyrosine mark. Position 62 (Ser62) interacts with Mn(2+). Ser62 (phosphoserine intermediate) is an active-site residue. Substrate-binding positions include His123, 153–154, Arg185, Arg191, 261–264, and Lys336; these read RD and RPDR. Asp403, His407, Asp444, His445, and His462 together coordinate Mn(2+).

Belongs to the BPG-independent phosphoglycerate mutase family. In terms of assembly, monomer. It depends on Mn(2+) as a cofactor.

The enzyme catalyses (2R)-2-phosphoglycerate = (2R)-3-phosphoglycerate. The protein operates within carbohydrate degradation; glycolysis; pyruvate from D-glyceraldehyde 3-phosphate: step 3/5. Essential for rapid growth and for sporulation. Catalyzes the interconversion of 2-phosphoglycerate and 3-phosphoglycerate. The protein is 2,3-bisphosphoglycerate-independent phosphoglycerate mutase of Bacillus velezensis (strain DSM 23117 / BGSC 10A6 / LMG 26770 / FZB42) (Bacillus amyloliquefaciens subsp. plantarum).